Here is a 152-residue protein sequence, read N- to C-terminus: Erythema protein SVEP (152 aa).

The N-terminal stretch at 1–18 (MSITQSFFVLTLAIFGAA) is a signal peptide.

As to expression, salivary gland (at protein level).

It is found in the secreted. Salivary vasoactive peptide; induces vasodilatation in bioassay with rabbit aortic rings. This Simulium vittatum (Striped black fly) protein is Erythema protein SVEP.